Consider the following 262-residue polypeptide: Nodulation protein J (262 aa).

The ABC transmembrane type-2 domain maps to 33 to 259; sequence ASILGNLAEP…FLSVGLLQRR (227 aa). 6 consecutive transmembrane segments (helical) span residues 35 to 55, 62 to 82, 125 to 145, 147 to 167, 177 to 197, and 236 to 256; these read ILGNLAEPVTSLFGLGFGLGA, GIPYVAFLAAGMVATSAMISA, ALLAGTAMMLVAATMGFASWP, VLFALPVIALTGFAFASLAMI, YFIFYQTLFLTPMLFLSGAVF, and LHISALCIFAVMPFFLSVGLL.

It belongs to the ABC-2 integral membrane protein family. Lipooligosaccharide exporter (TC 3.A.1.102) subfamily. As to quaternary structure, the complex is composed of two ATP-binding proteins (NodI) and two transmembrane proteins (NodJ).

Its subcellular location is the cell inner membrane. Part of the ABC transporter complex NodIJ involved in the export of the nodulation factors (Nod factors), the bacterial signal molecules that induce symbiosis and subsequent nodulation induction. Nod factors are LCO (lipo-chitin oligosaccharide), a modified beta-1,4-linked N-acetylglucosamine oligosaccharide. This subunit encodes the transporter. The chain is Nodulation protein J (nodJ) from Sinorhizobium fredii (strain NBRC 101917 / NGR234).